We begin with the raw amino-acid sequence, 162 residues long: Protein LTO1 (162 aa).

The interval 17–53 is deca-GX3 motif; required for interaction with YAE1 and the CIA complex; that stretch reads GFLEGQNENIKQSFLEGKQYGLQVGFQRFTLLGQMEG.

Belongs to the LTO1 family. Forms a complex with YAE1; the complex bridges the interaction between the CIA complex and RLI1. Associates with the CIA complex (via its C-terminal tryptophan).

The protein resides in the nucleus. Essential for life in oxygen, but nonessential under anaerobic conditions. Required for biogenesis of the large ribosomal subunit and initiation of translation in oxygen. The complex LTO1:YAE1 functions as a target specific adapter that recruits apo-RLI1 to the cytosolic iron-sulfur protein assembly (CIA) complex machinery. The protein is Protein LTO1 of Saccharomyces cerevisiae (strain ATCC 204508 / S288c) (Baker's yeast).